The primary structure comprises 118 residues: Na(+)/H(+) antiporter subunit G1 (118 aa).

3 helical membrane-spanning segments follow: residues 9 to 29 (LAVI…IGII), 47 to 67 (LGAI…DGYI), and 69 to 89 (MQLI…SHLI).

It belongs to the CPA3 antiporters (TC 2.A.63) subunit G family. In terms of assembly, may form a heterooligomeric complex that consists of seven subunits: mnhA1, mnhB1, mnhC1, mnhD1, mnhE1, mnhF1 and mnhG1.

It localises to the cell membrane. Its function is as follows. Mnh complex is a Na(+)/H(+) antiporter involved in Na(+) excretion. The sequence is that of Na(+)/H(+) antiporter subunit G1 (mnhG1) from Staphylococcus haemolyticus (strain JCSC1435).